The sequence spans 142 residues: Large ribosomal subunit protein uL13 (142 aa).

The protein belongs to the universal ribosomal protein uL13 family. Part of the 50S ribosomal subunit.

Functionally, this protein is one of the early assembly proteins of the 50S ribosomal subunit, although it is not seen to bind rRNA by itself. It is important during the early stages of 50S assembly. The sequence is that of Large ribosomal subunit protein uL13 from Vibrio parahaemolyticus serotype O3:K6 (strain RIMD 2210633).